We begin with the raw amino-acid sequence, 484 residues long: MKFIVKLYPEIMMKSKPVRMRFTKMLETNIRNVLKKVDEDAKVQRQWDRIWVKVPNDKPELAQAFGERLACIPGIAHVVQVDEYSFTSVDDIYQQVLPVYRDQIAGKTFCVRVKRTGSHDFNSIEVERYVGGGLNQFTDAIGVRLKNPEVTVNLEIEGDKLYMVTKRIEGLGGFPMATQEDVLSLISGGFDSGVSSYQFIKKGARTHYCFFNLGGAQHEIGVKQVAYHLWKTYGESHKVKFVSVPFEPVVAEILEKIDNGQMGVVLKRMMMRTAARIAERMGIQAIVTGESLGQVSSQTLTNLNVIDRCTDMLILRPLIAMDKQDIINECRRIGTEDFAKSMPEYCGVISQKPTVKAVLAKVEAEETKFSEDLIDRIVEQAVVIDIREIAEQMNTRITETETVVAIDTNEVVIDIRAPEEEENKPLEIEGVEIKRIPFFKLATQFADLDKQKTYLLYCERGVMSKLQALYLIEQGYHNVKVYRP.

The region spanning 63 to 167 (QAFGERLACI…GDKLYMVTKR (105 aa)) is the THUMP domain. ATP-binding positions include 185–186 (LI), Lys-267, Gly-289, and Gln-298. A disulfide bridge links Cys-346 with Cys-458. A Rhodanese domain is found at 406 to 484 (IDTNEVVIDI…GYHNVKVYRP (79 aa)). Cys-458 functions as the Cysteine persulfide intermediate in the catalytic mechanism.

This sequence belongs to the ThiI family.

It localises to the cytoplasm. It carries out the reaction [ThiI sulfur-carrier protein]-S-sulfanyl-L-cysteine + a uridine in tRNA + 2 reduced [2Fe-2S]-[ferredoxin] + ATP + H(+) = [ThiI sulfur-carrier protein]-L-cysteine + a 4-thiouridine in tRNA + 2 oxidized [2Fe-2S]-[ferredoxin] + AMP + diphosphate. The catalysed reaction is [ThiS sulfur-carrier protein]-C-terminal Gly-Gly-AMP + S-sulfanyl-L-cysteinyl-[cysteine desulfurase] + AH2 = [ThiS sulfur-carrier protein]-C-terminal-Gly-aminoethanethioate + L-cysteinyl-[cysteine desulfurase] + A + AMP + 2 H(+). It participates in cofactor biosynthesis; thiamine diphosphate biosynthesis. In terms of biological role, catalyzes the ATP-dependent transfer of a sulfur to tRNA to produce 4-thiouridine in position 8 of tRNAs, which functions as a near-UV photosensor. Also catalyzes the transfer of sulfur to the sulfur carrier protein ThiS, forming ThiS-thiocarboxylate. This is a step in the synthesis of thiazole, in the thiamine biosynthesis pathway. The sulfur is donated as persulfide by IscS. This Shewanella sp. (strain MR-4) protein is tRNA sulfurtransferase.